Consider the following 692-residue polypeptide: Elongation factor G (692 aa).

One can recognise a tr-type G domain in the interval 8 to 282; sequence ENTRNIGIMA…AVIDYLPSPL (275 aa). GTP contacts are provided by residues 17–24, 81–85, and 135–138; these read AHIDAGKT, DTPGH, and NKMD.

This sequence belongs to the TRAFAC class translation factor GTPase superfamily. Classic translation factor GTPase family. EF-G/EF-2 subfamily.

The protein resides in the cytoplasm. Its function is as follows. Catalyzes the GTP-dependent ribosomal translocation step during translation elongation. During this step, the ribosome changes from the pre-translocational (PRE) to the post-translocational (POST) state as the newly formed A-site-bound peptidyl-tRNA and P-site-bound deacylated tRNA move to the P and E sites, respectively. Catalyzes the coordinated movement of the two tRNA molecules, the mRNA and conformational changes in the ribosome. This is Elongation factor G from Bacillus cereus (strain G9842).